Consider the following 85-residue polypeptide: Large ribosomal subunit protein bL27 (85 aa).

Polar residues predominate over residues Met1–Gly13. Residues Met1 to Gly26 form a disordered region.

The protein belongs to the bacterial ribosomal protein bL27 family.

This is Large ribosomal subunit protein bL27 from Mycoplasma mobile (strain ATCC 43663 / 163K / NCTC 11711) (Mesomycoplasma mobile).